Reading from the N-terminus, the 316-residue chain is MSDTATPLAPSGVFSVPGKDGDPSLREWLALLKPRVISLVVFTGAAGMAVAPRWPSIPIGLITILCICIGAGAAGAINMWYDRDIDAIMKRTVVRPIPDGRMPEQAALVYGVVLSVLSVIVLWLATNALAADILAFSIFFYSVIYTMWLKRSTPQNIVIGGAAGAFPPMIGWAATMNSMAVLPVAMFAIVFLWTPPHFWSLSLYACKDYGKAGIPMLPVVKGARHTRWQILIYTFILTAVSLVPSFVHEVGLTYTVVTSLLDLGFILCAFRVLMDKQDAEGVSLTKDKPARFAFRYSLVYLFLLFCGLLVDRVLIG.

9 consecutive transmembrane segments (helical) span residues 28-48 (WLAL…AAGM), 57-77 (IPIG…AGAI), 106-126 (AALV…WLAT), 129-149 (LAAD…TMWL), 156-176 (NIVI…AATM), 179-199 (MAVL…PHFW), 230-250 (ILIY…VHEV), 254-274 (YTVV…RVLM), and 296-316 (YSLV…VLIG).

This sequence belongs to the UbiA prenyltransferase family. Protoheme IX farnesyltransferase subfamily.

It is found in the cell inner membrane. The catalysed reaction is heme b + (2E,6E)-farnesyl diphosphate + H2O = Fe(II)-heme o + diphosphate. Its pathway is porphyrin-containing compound metabolism; heme O biosynthesis; heme O from protoheme: step 1/1. Its function is as follows. Converts heme B (protoheme IX) to heme O by substitution of the vinyl group on carbon 2 of heme B porphyrin ring with a hydroxyethyl farnesyl side group. The chain is Protoheme IX farnesyltransferase from Gluconobacter oxydans (strain 621H) (Gluconobacter suboxydans).